Reading from the N-terminus, the 580-residue chain is 2-succinyl-5-enolpyruvyl-6-hydroxy-3-cyclohexene-1-carboxylate synthase (580 aa).

Belongs to the TPP enzyme family. MenD subfamily. In terms of assembly, homodimer. It depends on Mg(2+) as a cofactor. The cofactor is Mn(2+). Thiamine diphosphate is required as a cofactor.

It catalyses the reaction isochorismate + 2-oxoglutarate + H(+) = 5-enolpyruvoyl-6-hydroxy-2-succinyl-cyclohex-3-ene-1-carboxylate + CO2. Its pathway is quinol/quinone metabolism; 1,4-dihydroxy-2-naphthoate biosynthesis; 1,4-dihydroxy-2-naphthoate from chorismate: step 2/7. It functions in the pathway quinol/quinone metabolism; menaquinone biosynthesis. Catalyzes the thiamine diphosphate-dependent decarboxylation of 2-oxoglutarate and the subsequent addition of the resulting succinic semialdehyde-thiamine pyrophosphate anion to isochorismate to yield 2-succinyl-5-enolpyruvyl-6-hydroxy-3-cyclohexene-1-carboxylate (SEPHCHC). The protein is 2-succinyl-5-enolpyruvyl-6-hydroxy-3-cyclohexene-1-carboxylate synthase of Listeria monocytogenes serovar 1/2a (strain ATCC BAA-679 / EGD-e).